The sequence spans 274 residues: Large ribosomal subunit protein uL2 (274 aa).

2 disordered regions span residues 34-54 (LEKKSKSGGRNNNGRITTRHI) and 224-261 (VAMNPVDHPHGGGEGRTSGGRHPVSPWGFPTKGAKTRA).

This sequence belongs to the universal ribosomal protein uL2 family. In terms of assembly, part of the 50S ribosomal subunit. Forms a bridge to the 30S subunit in the 70S ribosome.

Functionally, one of the primary rRNA binding proteins. Required for association of the 30S and 50S subunits to form the 70S ribosome, for tRNA binding and peptide bond formation. It has been suggested to have peptidyltransferase activity; this is somewhat controversial. Makes several contacts with the 16S rRNA in the 70S ribosome. This Ectopseudomonas mendocina (strain ymp) (Pseudomonas mendocina) protein is Large ribosomal subunit protein uL2.